Consider the following 87-residue polypeptide: Small ribosomal subunit protein eS21B (87 aa).

Residue Met-1 is modified to N-acetylmethionine.

The protein belongs to the eukaryotic ribosomal protein eS21 family. Component of the small ribosomal subunit (SSU). Mature yeast ribosomes consist of a small (40S) and a large (60S) subunit. The 40S small subunit contains 1 molecule of ribosomal RNA (18S rRNA) and 33 different proteins (encoded by 57 genes). The large 60S subunit contains 3 rRNA molecules (25S, 5.8S and 5S rRNA) and 46 different proteins (encoded by 81 genes). Post-translationally, N-terminally acetylated by acetyltransferase NatB.

Its subcellular location is the cytoplasm. Functionally, component of the ribosome, a large ribonucleoprotein complex responsible for the synthesis of proteins in the cell. The small ribosomal subunit (SSU) binds messenger RNAs (mRNAs) and translates the encoded message by selecting cognate aminoacyl-transfer RNA (tRNA) molecules. The large subunit (LSU) contains the ribosomal catalytic site termed the peptidyl transferase center (PTC), which catalyzes the formation of peptide bonds, thereby polymerizing the amino acids delivered by tRNAs into a polypeptide chain. The nascent polypeptides leave the ribosome through a tunnel in the LSU and interact with protein factors that function in enzymatic processing, targeting, and the membrane insertion of nascent chains at the exit of the ribosomal tunnel. eS21 is required for the processing of the 20S rRNA-precursor to mature 18S rRNA in a late step of the maturation of 40S ribosomal subunits. Has a physiological role leading to 18S rRNA stability. This chain is Small ribosomal subunit protein eS21B, found in Saccharomyces cerevisiae (strain ATCC 204508 / S288c) (Baker's yeast).